Here is a 405-residue protein sequence, read N- to C-terminus: Probable dual-specificity RNA methyltransferase RlmN (405 aa).

Residues 1 to 15 show a composition bias toward low complexity; that stretch reads MSSTGSSVSTSGLVL. The segment at 1–34 is disordered; that stretch reads MSSTGSSVSTSGLVLPSTPLAEPGKEVPLVVNTP. Residue glutamate 130 is the Proton acceptor of the active site. Residues 142-386 enclose the Radical SAM core domain; that stretch reads SAARATLCLS…VTVRDTRGSE (245 aa). A disulfide bridge links cysteine 149 with cysteine 391. [4Fe-4S] cluster is bound by residues cysteine 156, cysteine 160, and cysteine 163. S-adenosyl-L-methionine contacts are provided by residues 211 to 212, serine 245, 268 to 270, and asparagine 348; these read GE and SLH. The active-site S-methylcysteine intermediate is cysteine 391.

The protein belongs to the radical SAM superfamily. RlmN family. The cofactor is [4Fe-4S] cluster.

The protein localises to the cytoplasm. The enzyme catalyses adenosine(2503) in 23S rRNA + 2 reduced [2Fe-2S]-[ferredoxin] + 2 S-adenosyl-L-methionine = 2-methyladenosine(2503) in 23S rRNA + 5'-deoxyadenosine + L-methionine + 2 oxidized [2Fe-2S]-[ferredoxin] + S-adenosyl-L-homocysteine. The catalysed reaction is adenosine(37) in tRNA + 2 reduced [2Fe-2S]-[ferredoxin] + 2 S-adenosyl-L-methionine = 2-methyladenosine(37) in tRNA + 5'-deoxyadenosine + L-methionine + 2 oxidized [2Fe-2S]-[ferredoxin] + S-adenosyl-L-homocysteine. In terms of biological role, specifically methylates position 2 of adenine 2503 in 23S rRNA and position 2 of adenine 37 in tRNAs. The polypeptide is Probable dual-specificity RNA methyltransferase RlmN (Cutibacterium acnes (strain DSM 16379 / KPA171202) (Propionibacterium acnes)).